The sequence spans 541 residues: Calcium-dependent protein kinase 26 (541 aa).

Residues 1 to 11 are compositionally biased toward gly residues; sequence MGQCCTGGGKA. The segment at 1–74 is disordered; that stretch reads MGQCCTGGGK…AGPIGEVLER (74 aa). Residue glycine 2 is the site of N-myristoyl glycine attachment. Positions 38–67 are enriched in low complexity; that stretch reads AKQQPCSPAAKAAATEAAAAASSSKKPAGP. In terms of domain architecture, Protein kinase spans 83–341; the sequence is YSIGKELGRG…AFQVLNHPWI (259 aa). ATP is bound by residues 89 to 97 and lysine 112; that span reads LGRGQFGVT. Aspartate 207 serves as the catalytic Proton acceptor. Residues 347–377 form an autoinhibitory domain region; sequence APDVPLDNVVLNRLKQFRAMNQFKKAALRII. EF-hand domains lie at 384–419, 420–455, 456–491, and 493–526; these read EEIK…QGTK, FSDN…MNKM, DREE…QGLY, and ANEI…GSGC. Ca(2+)-binding residues include aspartate 397, aspartate 399, serine 401, threonine 403, glutamate 408, aspartate 433, aspartate 435, asparagine 437, glutamate 444, aspartate 469, aspartate 471, serine 473, tyrosine 475, glutamate 480, aspartate 504, asparagine 506, aspartate 508, arginine 510, and glutamate 515.

It belongs to the protein kinase superfamily. Ser/Thr protein kinase family. CDPK subfamily. As to expression, specifically expressed in heading panicles, spikelets and mature pollen grains. Not expressed in vegetative tissues.

The protein resides in the membrane. The enzyme catalyses L-seryl-[protein] + ATP = O-phospho-L-seryl-[protein] + ADP + H(+). It carries out the reaction L-threonyl-[protein] + ATP = O-phospho-L-threonyl-[protein] + ADP + H(+). With respect to regulation, activated by calcium. Autophosphorylation may play an important role in the regulation of the kinase activity. Its function is as follows. May play a role in signal transduction pathways that involve calcium as a second messenger. In Oryza sativa subsp. japonica (Rice), this protein is Calcium-dependent protein kinase 26.